Reading from the N-terminus, the 329-residue chain is Octaprenyl diphosphate synthase (329 aa).

3 residues coordinate isopentenyl diphosphate: lysine 51, arginine 54, and histidine 83. The Mg(2+) site is built by aspartate 90 and aspartate 94. Arginine 99 serves as a coordination point for an all-trans-polyprenyl diphosphate. Arginine 100 contributes to the isopentenyl diphosphate binding site. An all-trans-polyprenyl diphosphate-binding residues include lysine 176, threonine 177, and glutamine 214.

The protein belongs to the FPP/GGPP synthase family. Requires Mg(2+) as cofactor.

It carries out the reaction 5 isopentenyl diphosphate + (2E,6E)-farnesyl diphosphate = all-trans-octaprenyl diphosphate + 5 diphosphate. Supplies octaprenyl diphosphate, the precursor for the side chain of the isoprenoid quinones ubiquinone and menaquinone. The polypeptide is Octaprenyl diphosphate synthase (ispB) (Haemophilus influenzae (strain ATCC 51907 / DSM 11121 / KW20 / Rd)).